Reading from the N-terminus, the 98-residue chain is MSLVYMNTALAFSISMLGLLMYRAHLMSSLLCLEGMMLSLFTLGAITILTTHFTLANMLPIVLLVFAACEAAVGLSLLVMVSNTYGADFVQNLNLLQC.

3 helical membrane passes run 1–21, 30–50, and 61–81; these read MSLVYMNTALAFSISMLGLLM, LLCLEGMMLSLFTLGAITILT, and IVLLVFAACEAAVGLSLLVMV.

Belongs to the complex I subunit 4L family. Core subunit of respiratory chain NADH dehydrogenase (Complex I) which is composed of 45 different subunits.

The protein resides in the mitochondrion inner membrane. The enzyme catalyses a ubiquinone + NADH + 5 H(+)(in) = a ubiquinol + NAD(+) + 4 H(+)(out). In terms of biological role, core subunit of the mitochondrial membrane respiratory chain NADH dehydrogenase (Complex I) which catalyzes electron transfer from NADH through the respiratory chain, using ubiquinone as an electron acceptor. Part of the enzyme membrane arm which is embedded in the lipid bilayer and involved in proton translocation. The sequence is that of NADH-ubiquinone oxidoreductase chain 4L (MT-ND4L) from Crocidura russula (Greater white-toothed shrew).